We begin with the raw amino-acid sequence, 359 residues long: UDP-2-acetamido-2-deoxy-3-oxo-D-glucuronate aminotransferase (359 aa).

UDP-2-acetamido-2-deoxy-alpha-D-ribo-hex-3-uluronate contacts are provided by G29, Y31, and S184. K185 carries the N6-(pyridoxal phosphate)lysine modification. Positions 229, 308, and 309 each coordinate UDP-2-acetamido-2-deoxy-alpha-D-ribo-hex-3-uluronate.

This sequence belongs to the DegT/DnrJ/EryC1 family. As to quaternary structure, homodimer. Pyridoxal 5'-phosphate is required as a cofactor.

It carries out the reaction UDP-2-acetamido-2-deoxy-alpha-D-ribo-hex-3-uluronate + L-glutamate = UDP-2-acetamido-3-amino-2,3-dideoxy-alpha-D-glucuronate + 2-oxoglutarate. The protein operates within bacterial outer membrane biogenesis; LPS O-antigen biosynthesis. In terms of biological role, plays a role in the biosynthesis of B-band O antigen for serotype O5. Catalyzes the amination of UDP-2-acetamido-2-deoxy-3-oxo-D-glucuronic acid (UDP-3-oxo-D-GlcNAcA) to UDP-2-acetamido-3-amino-2,3-dideoxy-D-glucuronic acid (UDP-GlcNAc3NA), using L-glutamate as the preferred amine donor. The chain is UDP-2-acetamido-2-deoxy-3-oxo-D-glucuronate aminotransferase from Pseudomonas aeruginosa (strain ATCC 15692 / DSM 22644 / CIP 104116 / JCM 14847 / LMG 12228 / 1C / PRS 101 / PAO1).